We begin with the raw amino-acid sequence, 80 residues long: Acyl carrier protein (80 aa).

Residues 1–76 (MTLEEKIIEI…DVIDYLKVRN (76 aa)) enclose the Carrier domain. Ser-36 is subject to O-(pantetheine 4'-phosphoryl)serine.

This sequence belongs to the acyl carrier protein (ACP) family. Post-translationally, 4'-phosphopantetheine is transferred from CoA to a specific serine of apo-ACP by AcpS. This modification is essential for activity because fatty acids are bound in thioester linkage to the sulfhydryl of the prosthetic group.

It is found in the cytoplasm. It participates in lipid metabolism; fatty acid biosynthesis. In terms of biological role, carrier of the growing fatty acid chain in fatty acid biosynthesis. The sequence is that of Acyl carrier protein from Syntrophus aciditrophicus (strain SB).